The chain runs to 93 residues: UPF0223 protein SAG0995 (93 aa).

The protein belongs to the UPF0223 family.

The chain is UPF0223 protein SAG0995 from Streptococcus agalactiae serotype V (strain ATCC BAA-611 / 2603 V/R).